The chain runs to 823 residues: Pentatricopeptide repeat-containing protein At4g33990 (823 aa).

16 PPR repeats span residues 85–115, 116–151, 152–183, 184–214, 215–249, 252–280, 281–311, 312–346, 347–381, 383–413, 414–448, 450–484, 485–515, 516–550, 551–581, and 587–617; these read NVCI…IQNR, DVYA…GLTP, DYRT…GFMW, DVYV…MPVR, DMGS…DSVT, SLLS…GLES, ELFV…MYVR, DLIS…RIQP, DCLT…GWFL, DITI…LPNT, DVIS…GEIA, NQGT…GLYL, DVFV…IPRV, NSVP…GVKP, DHIT…MQTD, and SLKH…MSLQ. The type E motif stretch occupies residues 622-697; it reads IWGALLSACR…TPGWSSMEVD (76 aa). Residues 698–728 form a type E(+) motif region; the sequence is NKVEVFYTGNQTHPMYEEMYRELTALQAKLK. The type DYW motif stretch occupies residues 729 to 823; the sequence is MIGYVPDHRF…NGVCSCGDYW (95 aa).

This sequence belongs to the PPR family. PCMP-H subfamily.

The chain is Pentatricopeptide repeat-containing protein At4g33990 (EMB2758) from Arabidopsis thaliana (Mouse-ear cress).